Reading from the N-terminus, the 89-residue chain is UPF0250 protein Bphy_0213 (89 aa).

This sequence belongs to the UPF0250 family.

In Paraburkholderia phymatum (strain DSM 17167 / CIP 108236 / LMG 21445 / STM815) (Burkholderia phymatum), this protein is UPF0250 protein Bphy_0213.